The chain runs to 207 residues: Urease accessory protein UreG (207 aa).

14–21 (GPVGSGKT) contributes to the GTP binding site.

This sequence belongs to the SIMIBI class G3E GTPase family. UreG subfamily. Homodimer. UreD, UreF and UreG form a complex that acts as a GTP-hydrolysis-dependent molecular chaperone, activating the urease apoprotein by helping to assemble the nickel containing metallocenter of UreC. The UreE protein probably delivers the nickel.

It localises to the cytoplasm. Functionally, facilitates the functional incorporation of the urease nickel metallocenter. This process requires GTP hydrolysis, probably effectuated by UreG. This Chelativorans sp. (strain BNC1) protein is Urease accessory protein UreG.